The primary structure comprises 256 residues: Major prion protein (256 aa).

The first 24 residues, 1 to 24 (MVKSHIGSWILVLFVAMWSDVGLC), serve as a signal peptide directing secretion. The tract at residues 25-233 (KKRPKPGGGW…ESEAYYQRGA (209 aa)) is interaction with GRB2, ERI3 and SYN1. The tract at residues 28–110 (PKPGGGWNTG…QWNKPSKPKT (83 aa)) is disordered. Tandem repeats lie at residues 54–62 (PQGGGGWGQ), 63–70 (PHGGGWGQ), 71–78 (PHGGGWGQ), 79–86 (PHGGGWGQ), and 87–95 (PHGGGGWGQ). Residues 54 to 95 (PQGGGGWGQPHGGGWGQPHGGGWGQPHGGGWGQPHGGGGWGQ) form a 5 X 8 AA tandem repeats of P-H-G-G-G-W-G-Q region. Gly residues predominate over residues 55–97 (QGGGGWGQPHGGGWGQPHGGGWGQPHGGGWGQPHGGGGWGQGG). Residues His64, Gly65, Gly66, His72, Gly73, Gly74, His80, Gly81, Gly82, His88, Gly90, and Gly91 each coordinate Cu(2+). Cys182 and Cys217 form a disulfide bridge. N-linked (GlcNAc...) asparagine glycans are attached at residues Asn184 and Asn200. Residue Ala233 is the site of GPI-anchor amidated alanine attachment. A propeptide spans 234 to 256 (SVILFSSPPVILLISFLIFLIVG) (removed in mature form).

This sequence belongs to the prion family. As to quaternary structure, monomer and homodimer. Has a tendency to aggregate into amyloid fibrils containing a cross-beta spine, formed by a steric zipper of superposed beta-strands. Soluble oligomers may represent an intermediate stage on the path to fibril formation. Copper binding may promote oligomerization. Interacts with GRB2, APP, ERI3/PRNPIP and SYN1. Mislocalized cytosolically exposed PrP interacts with MGRN1; this interaction alters MGRN1 subcellular location and causes lysosomal enlargement. Interacts with KIAA1191.

It is found in the cell membrane. The protein localises to the golgi apparatus. In terms of biological role, its primary physiological function is unclear. Has cytoprotective activity against internal or environmental stresses. May play a role in neuronal development and synaptic plasticity. May be required for neuronal myelin sheath maintenance. May play a role in iron uptake and iron homeostasis. Soluble oligomers are toxic to cultured neuroblastoma cells and induce apoptosis (in vitro). Association with GPC1 (via its heparan sulfate chains) targets PRNP to lipid rafts. Also provides Cu(2+) or Zn(2+) for the ascorbate-mediated GPC1 deaminase degradation of its heparan sulfate side chains. This chain is Major prion protein (PRNP), found in Cervus elaphus (Red deer).